The primary structure comprises 223 residues: Arginine kinase (223 aa).

In terms of domain architecture, Phosphagen kinase C-terminal spans 56-222 (FVISTRVRLI…LELIKIEKEM (167 aa)). ATP-binding positions include 59-63 (STRVR) and His-68. Cys-141 contributes to the L-arginine binding site. ATP contacts are provided by residues 150 to 154 (RASVH) and 175 to 180 (RGTRGE). Glu-180 provides a ligand contact to L-arginine.

This sequence belongs to the ATP:guanido phosphotransferase family.

It catalyses the reaction L-arginine + ATP = N(omega)-phospho-L-arginine + ADP + H(+). The chain is Arginine kinase from Chionoecetes opilio (Atlantic snow crab).